Consider the following 349-residue polypeptide: UDP-N-acetylenolpyruvoylglucosamine reductase (349 aa).

Residues 24–197 (FGIAATARFA…VSVTFRLPKQ (174 aa)) enclose the FAD-binding PCMH-type domain. The active site involves Arg173. Residue Ser249 is the Proton donor of the active site. The active site involves Glu345.

This sequence belongs to the MurB family. Requires FAD as cofactor.

It localises to the cytoplasm. The catalysed reaction is UDP-N-acetyl-alpha-D-muramate + NADP(+) = UDP-N-acetyl-3-O-(1-carboxyvinyl)-alpha-D-glucosamine + NADPH + H(+). The protein operates within cell wall biogenesis; peptidoglycan biosynthesis. In terms of biological role, cell wall formation. The protein is UDP-N-acetylenolpyruvoylglucosamine reductase of Burkholderia lata (strain ATCC 17760 / DSM 23089 / LMG 22485 / NCIMB 9086 / R18194 / 383).